Consider the following 341-residue polypeptide: Ubiquinone biosynthesis protein COQ4, mitochondrial (341 aa).

The transit peptide at 1 to 16 directs the protein to the mitochondrion; it reads MLSRISSVRIGTQVRQ. The Zn(2+) site is built by histidine 220, aspartate 221, histidine 224, and glutamate 236.

The protein belongs to the COQ4 family. As to quaternary structure, component of a multi-subunit COQ enzyme complex, composed of at least COQ3, COQ4, COQ5, COQ6, COQ7 and COQ9. The cofactor is Zn(2+).

The protein resides in the mitochondrion inner membrane. It catalyses the reaction a 4-hydroxy-3-methoxy-5-(all-trans-polyprenyl)benzoate + H(+) = a 2-methoxy-6-(all-trans-polyprenyl)phenol + CO2. It functions in the pathway cofactor biosynthesis; ubiquinone biosynthesis. Functionally, lyase that catalyzes the C1-decarboxylation of 4-hydroxy-3-methoxy-5-(all-trans-polyprenyl)benzoic acid into 2-methoxy-6-(all-trans-polyprenyl)phenol during ubiquinone biosynthesis. The sequence is that of Ubiquinone biosynthesis protein COQ4, mitochondrial from Vanderwaltozyma polyspora (strain ATCC 22028 / DSM 70294 / BCRC 21397 / CBS 2163 / NBRC 10782 / NRRL Y-8283 / UCD 57-17) (Kluyveromyces polysporus).